Here is a 396-residue protein sequence, read N- to C-terminus: Phosphoglycerate kinase (396 aa).

Residues 21–23 (DLN), Arg-36, 59–62 (HFGR), Arg-118, and Arg-151 contribute to the substrate site. Residues Lys-201, Glu-323, and 353 to 356 (GGDT) contribute to the ATP site.

It belongs to the phosphoglycerate kinase family. Monomer.

The protein resides in the cytoplasm. The enzyme catalyses (2R)-3-phosphoglycerate + ATP = (2R)-3-phospho-glyceroyl phosphate + ADP. The protein operates within carbohydrate degradation; glycolysis; pyruvate from D-glyceraldehyde 3-phosphate: step 2/5. In Brucella abortus biovar 1 (strain 9-941), this protein is Phosphoglycerate kinase.